Reading from the N-terminus, the 312-residue chain is Glyoxylate/hydroxypyruvate reductase A (312 aa).

Residue Arg-227 is part of the active site. The Proton donor role is filled by His-275.

Belongs to the D-isomer specific 2-hydroxyacid dehydrogenase family. GhrA subfamily.

Its subcellular location is the cytoplasm. It carries out the reaction glycolate + NADP(+) = glyoxylate + NADPH + H(+). It catalyses the reaction (R)-glycerate + NAD(+) = 3-hydroxypyruvate + NADH + H(+). The enzyme catalyses (R)-glycerate + NADP(+) = 3-hydroxypyruvate + NADPH + H(+). Catalyzes the NADPH-dependent reduction of glyoxylate and hydroxypyruvate into glycolate and glycerate, respectively. The sequence is that of Glyoxylate/hydroxypyruvate reductase A from Salmonella paratyphi B (strain ATCC BAA-1250 / SPB7).